We begin with the raw amino-acid sequence, 354 residues long: Chorismate synthase (354 aa).

Arginine 48 provides a ligand contact to NADP(+). Residues 125 to 127 (RAS), glycine 277, 292 to 296 (KPIPS), and arginine 318 contribute to the FMN site.

It belongs to the chorismate synthase family. Homotetramer. Requires FMNH2 as cofactor.

It catalyses the reaction 5-O-(1-carboxyvinyl)-3-phosphoshikimate = chorismate + phosphate. Its pathway is metabolic intermediate biosynthesis; chorismate biosynthesis; chorismate from D-erythrose 4-phosphate and phosphoenolpyruvate: step 7/7. Catalyzes the anti-1,4-elimination of the C-3 phosphate and the C-6 proR hydrogen from 5-enolpyruvylshikimate-3-phosphate (EPSP) to yield chorismate, which is the branch point compound that serves as the starting substrate for the three terminal pathways of aromatic amino acid biosynthesis. This reaction introduces a second double bond into the aromatic ring system. The protein is Chorismate synthase of Nitratidesulfovibrio vulgaris (strain ATCC 29579 / DSM 644 / CCUG 34227 / NCIMB 8303 / VKM B-1760 / Hildenborough) (Desulfovibrio vulgaris).